We begin with the raw amino-acid sequence, 117 residues long: UPF0102 protein YE3728 (117 aa).

This sequence belongs to the UPF0102 family.

The protein is UPF0102 protein YE3728 of Yersinia enterocolitica serotype O:8 / biotype 1B (strain NCTC 13174 / 8081).